A 717-amino-acid chain; its full sequence is uncharacterized protein (717 aa).

A helical membrane pass occupies residues 19-38; the sequence is VFLSTIFVSIIFCLGILFLV.

To E.coli YtfN.

The protein resides in the membrane. This is an uncharacterized protein from Buchnera aphidicola subsp. Baizongia pistaciae (strain Bp).